Consider the following 342-residue polypeptide: Olfactory receptor 51F2 (342 aa).

At methionine 1 to tyrosine 39 the chain is on the extracellular side. N-linked (GlcNAc...) asparagine glycosylation occurs at asparagine 17. The helical transmembrane segment at tryptophan 40 to leucine 60 threads the bilayer. Over phenylalanine 61–serine 68 the chain is Cytoplasmic. Residues leucine 69–leucine 89 form a helical membrane-spanning segment. Residues cysteine 90–alanine 113 are Extracellular-facing. Residues cysteine 111 and cysteine 203 are joined by a disulfide bond. The chain crosses the membrane as a helical span at residues glutamine 114–phenylalanine 134. Residues aspartate 135–alanine 153 lie on the Cytoplasmic side of the membrane. The chain crosses the membrane as a helical span at residues arginine 154–methionine 174. The Extracellular portion of the chain corresponds to leucine 175–serine 210. Residues isoleucine 211–serine 231 form a helical membrane-spanning segment. At tyrosine 232–alanine 251 the chain is on the cytoplasmic side. The helical transmembrane segment at phenylalanine 252 to leucine 272 threads the bilayer. Residues serine 273–histidine 287 lie on the Extracellular side of the membrane. The chain crosses the membrane as a helical span at residues isoleucine 288–valine 308. Residues lysine 309–glutamate 342 are Cytoplasmic-facing.

Belongs to the G-protein coupled receptor 1 family.

It is found in the cell membrane. Functionally, odorant receptor. This Homo sapiens (Human) protein is Olfactory receptor 51F2 (OR51F2).